Consider the following 1020-residue polypeptide: Neurofilament heavy polypeptide (1020 aa).

The interval 1-100 is head; the sequence is MMSFGGADAL…VATSRSEKEQ (100 aa). Positions 58 to 83 are disordered; it reads VSASPSRFRGAGAASSTDSLDTLSNG. A compositionally biased stretch (polar residues) spans 71–82; that stretch reads ASSTDSLDTLSN. 2 positions are modified to phosphoserine: S76 and S124. The region spanning 97–413 is the IF rod domain; the sequence is EKEQLQALND…KLLEGEECRI (317 aa). Positions 101-132 are coil 1A; it reads LQALNDRFAGYIDKVRQLEAHNRSLEGEAAAL. Positions 133–145 are linker 1; sequence RQQQAGRSAMGEL. The coil 1B stretch occupies residues 146–244; that stretch reads YEREVREMRG…QEEVGELLGQ (99 aa). The tract at residues 245-266 is linker 12; sequence IQGSGAAQAQMQAETRDALKCD. Residues 267–288 form a coil 2A region; the sequence is VTSALREIRAQLEGHAVQSTLQ. Residues 289–292 form a linker 2 region; that stretch reads SEEW. Residues 293–413 form a coil 2B region; that stretch reads FRVRLDRLSE…KLLEGEECRI (121 aa). S347 and S421 each carry phosphoserine. Positions 414–1020 are tail; it reads GFGPIPFSLP…ATEDKAAKGK (607 aa). The interval 456 to 1020 is disordered; it reads IVEEQTEETQ…ATEDKAAKGK (565 aa). Composition is skewed to acidic residues over residues 459–475 and 483–498; these read EQTEETQVTEEVTEEEE and GKEEEGGEEEEAEGGE. A phosphoserine mark is found at S511, S526, S532, S540, S546, S552, S560, S566, S574, S580, S586, S594, S600, S606, S614, S620, S628, S634, S640, S648, S654, S662, S668, S676, S682, S690, S696, and S704. Basic and acidic residues predominate over residues 511-1020; the sequence is SPEKEAKSPV…ATEDKAAKGK (510 aa). 4 consecutive repeat copies span residues 525–530, 531–536, 539–544, and 545–550. A 30 X 6 AA repeats of K-S-P-[AEPV]-[EAK]-[AEVK] region spans residues 525–826; sequence KSPAEAKSPE…KEEVKSPVKE (302 aa). Repeat 5 spans residues 559-564; that stretch reads KSPPEA. 2 consecutive repeat copies span residues 573 to 578 and 579 to 584. 2 tandem repeats follow at residues 593–598 and 599–604. The stretch at 613-618 is repeat 10; that stretch reads KSPAEA. Tandem repeats lie at residues 627–632, 633–638, 639–644, and 647–652. 12 consecutive repeat copies span residues 661–666, 667–672, 675–680, 681–686, 689–694, 695–700, 703–708, 709–714, 717–722, 723–728, 737–742, and 745–750. A phosphoserine mark is found at S718, S724, and S738. 2 positions are modified to phosphoserine: S752 and S763. The stretch at 762–767 is repeat 27; that stretch reads KSPEAK. T768 carries the post-translational modification Phosphothreonine. 3 consecutive repeat copies span residues 786–791, 794–799, and 821–826. Phosphoserine occurs at positions 787, 795, 822, and 888.

Belongs to the intermediate filament family. Forms heterodimers with NEFL; which can further hetero-oligomerize (in vitro). Forms heterodimers with INA (in vitro). Post-translationally, there are a number of repeats of the tripeptide K-S-P, NFH is phosphorylated on a number of the serines in this motif. It is thought that phosphorylation of NFH results in the formation of interfilament cross bridges that are important in the maintenance of axonal caliber. In terms of processing, phosphorylation seems to play a major role in the functioning of the larger neurofilament polypeptides (NF-M and NF-H), the levels of phosphorylation being altered developmentally and coincidentally with a change in the neurofilament function. Phosphorylated in the head and rod regions by the PKC kinase PKN1, leading to the inhibition of polymerization.

Its subcellular location is the cytoplasm. It is found in the cytoskeleton. The protein localises to the cell projection. It localises to the axon. In terms of biological role, neurofilaments usually contain three intermediate filament proteins: NEFL, NEFM, and NEFH which are involved in the maintenance of neuronal caliber. NEFH has an important function in mature axons that is not subserved by the two smaller NF proteins. May additionally cooperate with the neuronal intermediate filament proteins PRPH and INA to form neuronal filamentous networks. The polypeptide is Neurofilament heavy polypeptide (NEFH) (Homo sapiens (Human)).